Consider the following 257-residue polypeptide: Imidazole glycerol phosphate synthase subunit HisF (257 aa).

Catalysis depends on residues aspartate 11 and aspartate 130.

Belongs to the HisA/HisF family. As to quaternary structure, heterodimer of HisH and HisF.

It is found in the cytoplasm. The catalysed reaction is 5-[(5-phospho-1-deoxy-D-ribulos-1-ylimino)methylamino]-1-(5-phospho-beta-D-ribosyl)imidazole-4-carboxamide + L-glutamine = D-erythro-1-(imidazol-4-yl)glycerol 3-phosphate + 5-amino-1-(5-phospho-beta-D-ribosyl)imidazole-4-carboxamide + L-glutamate + H(+). The protein operates within amino-acid biosynthesis; L-histidine biosynthesis; L-histidine from 5-phospho-alpha-D-ribose 1-diphosphate: step 5/9. Functionally, IGPS catalyzes the conversion of PRFAR and glutamine to IGP, AICAR and glutamate. The HisF subunit catalyzes the cyclization activity that produces IGP and AICAR from PRFAR using the ammonia provided by the HisH subunit. The chain is Imidazole glycerol phosphate synthase subunit HisF from Shewanella woodyi (strain ATCC 51908 / MS32).